The following is a 460-amino-acid chain: Argininosuccinate lyase (460 aa).

Belongs to the lyase 1 family. Argininosuccinate lyase subfamily.

Its subcellular location is the cytoplasm. The enzyme catalyses 2-(N(omega)-L-arginino)succinate = fumarate + L-arginine. Its pathway is amino-acid biosynthesis; L-arginine biosynthesis; L-arginine from L-ornithine and carbamoyl phosphate: step 3/3. The sequence is that of Argininosuccinate lyase from Mannheimia succiniciproducens (strain KCTC 0769BP / MBEL55E).